The primary structure comprises 440 residues: Glucose-1-phosphate adenylyltransferase (440 aa).

Residues tyrosine 125, glycine 190, 205 to 206, and serine 223 each bind alpha-D-glucose 1-phosphate; that span reads EK.

Belongs to the bacterial/plant glucose-1-phosphate adenylyltransferase family. Homotetramer.

The enzyme catalyses alpha-D-glucose 1-phosphate + ATP + H(+) = ADP-alpha-D-glucose + diphosphate. It functions in the pathway glycan biosynthesis; glycogen biosynthesis. Functionally, involved in the biosynthesis of ADP-glucose, a building block required for the elongation reactions to produce glycogen. Catalyzes the reaction between ATP and alpha-D-glucose 1-phosphate (G1P) to produce pyrophosphate and ADP-Glc. In Dechloromonas aromatica (strain RCB), this protein is Glucose-1-phosphate adenylyltransferase.